Consider the following 338-residue polypeptide: Phenylalanine--tRNA ligase alpha subunit (338 aa).

Glu252 is a binding site for Mg(2+).

The protein belongs to the class-II aminoacyl-tRNA synthetase family. Phe-tRNA synthetase alpha subunit type 1 subfamily. In terms of assembly, tetramer of two alpha and two beta subunits. Mg(2+) serves as cofactor.

The protein resides in the cytoplasm. It carries out the reaction tRNA(Phe) + L-phenylalanine + ATP = L-phenylalanyl-tRNA(Phe) + AMP + diphosphate + H(+). This chain is Phenylalanine--tRNA ligase alpha subunit, found in Pseudomonas fluorescens (strain Pf0-1).